A 359-amino-acid chain; its full sequence is RNA-binding protein 4B (359 aa).

RRM domains follow at residues 2 to 72 (VKLF…ASKN) and 78 to 148 (TKLH…LSTS). The CCHC-type zinc finger occupies 160-177 (SGCYRCGKEGHWSKECPV). An interaction with TNPO3 region spans residues 196 to 359 (AVRPPYTMGY…YVDRARYSAF (164 aa)).

In terms of assembly, interacts with TNPO3, which may mediate nuclear import of the protein.

The protein resides in the nucleus. It localises to the nucleolus. In terms of biological role, required for the translational activation of PER1 mRNA in response to circadian clock. Binds directly to the 3'-UTR of the PER1 mRNA. The chain is RNA-binding protein 4B (RBM4B) from Sus scrofa (Pig).